Consider the following 290-residue polypeptide: Bifunctional protein FolD 1 (290 aa).

NADP(+) contacts are provided by residues 172–174 (GAS) and Ile-238.

The protein belongs to the tetrahydrofolate dehydrogenase/cyclohydrolase family. In terms of assembly, homodimer.

It carries out the reaction (6R)-5,10-methylene-5,6,7,8-tetrahydrofolate + NADP(+) = (6R)-5,10-methenyltetrahydrofolate + NADPH. It catalyses the reaction (6R)-5,10-methenyltetrahydrofolate + H2O = (6R)-10-formyltetrahydrofolate + H(+). It participates in one-carbon metabolism; tetrahydrofolate interconversion. In terms of biological role, catalyzes the oxidation of 5,10-methylenetetrahydrofolate to 5,10-methenyltetrahydrofolate and then the hydrolysis of 5,10-methenyltetrahydrofolate to 10-formyltetrahydrofolate. The chain is Bifunctional protein FolD 1 from Pseudomonas putida (strain GB-1).